Here is a 212-residue protein sequence, read N- to C-terminus: MGTEFNGLFDEWAHTYDSFVQGEDIQYKEVFAHYEDILEDVVNKSFGNVLEFGVGTGNLTNKLLLAGRTVYGIEPSREMRMIAKEKLPKEFSITEGDFLSFEVPNSIDTIVSTYAFHHLTDDEKNVAIAKYSQLLNKGGKIVFADTIFADQDAYDKTVEAAKQRGFHQLANDLQTEYYTRIPVMQTIFENNGFHVTFTRLNHFVWVMEATKQ.

3 residues coordinate S-adenosyl-L-methionine: Gly-53, Glu-74, and Asp-97.

Belongs to the methyltransferase superfamily. YrrT family.

Could be a S-adenosyl-L-methionine-dependent methyltransferase. This is an uncharacterized protein from Bacillus cereus (strain 03BB102).